Reading from the N-terminus, the 572-residue chain is Probable transporter MCH1 (572 aa).

The segment covering 1–29 has biased composition (polar residues); it reads MSSSAPDDTQASRLDADQISTRSSSYASD. Residues 1–39 are disordered; it reads MSSSAPDDTQASRLDADQISTRSSSYASDNDTDSTETRI. Asn-30 is a glycosylation site (N-linked (GlcNAc...) asparagine). 10 helical membrane passes run 50 to 70, 89 to 109, 116 to 136, 159 to 179, 193 to 213, 232 to 252, 335 to 355, 426 to 446, 459 to 479, and 488 to 508; these read LLAF…VVFS, AVAI…GYIC, PLAL…AGVY, FLML…MAAV, GLAL…LSQA, VFRF…LGTF, LAFL…GTII, FMAF…SGLV, LVGA…TIIW, and YGLI…VYSA. Asn-515 carries an N-linked (GlcNAc...) asparagine glycan. The helical transmembrane segment at 539–559 threads the bilayer; it reads PTYWAETITVWIAVGLLLWAW.

It belongs to the major facilitator superfamily.

It is found in the vacuole membrane. Its function is as follows. Probable transporter. The chain is Probable transporter MCH1 (MCH1) from Gibberella zeae (strain ATCC MYA-4620 / CBS 123657 / FGSC 9075 / NRRL 31084 / PH-1) (Wheat head blight fungus).